We begin with the raw amino-acid sequence, 986 residues long: Ephrin type-B receptor 2 (986 aa).

The signal sequence occupies residues 1 to 18 (MAVRRLGAALLLLPLLAA). Over 19–543 (VEETLMDSTT…QTSIKEKLPL (525 aa)) the chain is Extracellular. An Eph LBD domain is found at 20-202 (EETLMDSTTA…FYRKCPRIIQ (183 aa)). 2 disulfide bridges follow: Cys62-Cys184 and Cys97-Cys107. Residues Asn265, Asn336, Asn428, and Asn482 are each glycosylated (N-linked (GlcNAc...) asparagine). Fibronectin type-III domains lie at 324-434 (IPSA…TNQA) and 435-530 (APSA…TMTE). The chain crosses the membrane as a helical span at residues 544–564 (IVGSSAAGLVFLIAVVVIAIV). The Cytoplasmic portion of the chain corresponds to 565-986 (CNRRGFERAD…QMNQIQSVEV (422 aa)). The 264-residue stretch at 621–884 (VKIEQVIGAG…QIVNTLDKMI (264 aa)) folds into the Protein kinase domain. Residues 627-635 (IGAGEFGEV) and Lys653 each bind ATP. The active-site Proton acceptor is Asp746. A Glycyl lysine isopeptide (Lys-Gly) (interchain with G-Cter in ubiquitin) cross-link involves residue Lys891. In terms of domain architecture, SAM spans 913 to 977 (TSFNTVDEWL…LNSIQVMRAQ (65 aa)). A PDZ-binding motif is present at residues 984–986 (VEV).

Belongs to the protein kinase superfamily. Tyr protein kinase family. Ephrin receptor subfamily. In terms of assembly, heterotetramer upon binding of the ligand. The heterotetramer is composed of an ephrin dimer and a receptor dimer. Interacts (via PDZ-binding motif) with GRIP1 and PICK1 (via PDZ domain). Interacts with ARHGEF15; mediates ARHGEF15 phosphorylation, ubiquitination and degradation by the proteasome. Interacts with AQP1; involved in endolymph production in the inner ear. Interacts with EFNA5. Interacts with SPSB1. Interacts with SPSB4. Interacts with SH2D3C. In terms of processing, autophosphorylated; ligand binding stimulates autophosphorylation on tyrosine residues. Post-translationally, ligand binding induces cleavage by matrix metalloproteinases (MMPs) such as MMP7/MMP9, producing an EphB2/N-terminal fragment (NTF) and a C-terminal long fragment (EphB2-LF). EphB2-LF is further cleaved by MMPs, producing EphB2/CTF1 which is further cleaved by the PS1/gamma-secretase producing EphB2/CTF2. Polyubiquitinated; ligand binding stimulates ubiquitination. Ubiquitinated by RNF186 at Lys-891, mainly through 'Lys-27'-linked polyubiquitin chains. Ubiquitinated by CRL2(KLHDC2) E3 ligase complex. As to expression, expressed in the epithelial dark cells of the inner ear. Expressed in the region of the proximal tubules of the kidney nephron. Expressed in myogenic progenitor cells.

The protein localises to the cell membrane. It is found in the cell projection. The protein resides in the axon. Its subcellular location is the dendrite. It carries out the reaction L-tyrosyl-[protein] + ATP = O-phospho-L-tyrosyl-[protein] + ADP + H(+). In terms of biological role, receptor tyrosine kinase which binds promiscuously transmembrane ephrin-B family ligands residing on adjacent cells, leading to contact-dependent bidirectional signaling into neighboring cells. The signaling pathway downstream of the receptor is referred to as forward signaling while the signaling pathway downstream of the ephrin ligand is referred to as reverse signaling. Functions in axon guidance during development. Involved in the guidance of commissural axons, that form a major interhemispheric connection between the 2 temporal lobes of the cerebral cortex. Also involved in guidance of contralateral inner ear efferent growth cones at the midline and of retinal ganglion cell axons to the optic disk. In addition to axon guidance, also regulates dendritic spines development and maturation and stimulates the formation of excitatory synapses. Upon activation by EFNB1, abolishes the ARHGEF15-mediated negative regulation on excitatory synapse formation. Controls other aspects of development including angiogenesis, palate development and in inner ear development through regulation of endolymph production. Forward and reverse signaling through the EFNB2/EPHB2 complex regulate movement and adhesion of cells that tubularize the urethra and septate the cloaca. May function as a tumor suppressor. May be involved in the regulation of platelet activation and blood coagulation. The chain is Ephrin type-B receptor 2 from Mus musculus (Mouse).